Here is a 256-residue protein sequence, read N- to C-terminus: Sec-independent protein translocase protein TatC (256 aa).

6 consecutive transmembrane segments (helical) span residues 25–45, 77–97, 117–137, 158–178, 195–215, and 217–237; these read VICV…IYHF, AIVA…AFIA, ILFY…VFSF, FALA…AIIL, PYII…DVFS, and TLLA…ARFY.

This sequence belongs to the TatC family. As to quaternary structure, the Tat system comprises two distinct complexes: a TatABC complex, containing multiple copies of TatA, TatB and TatC subunits, and a separate TatA complex, containing only TatA subunits. Substrates initially bind to the TatABC complex, which probably triggers association of the separate TatA complex to form the active translocon.

It is found in the cell inner membrane. Part of the twin-arginine translocation (Tat) system that transports large folded proteins containing a characteristic twin-arginine motif in their signal peptide across membranes. Together with TatB, TatC is part of a receptor directly interacting with Tat signal peptides. The protein is Sec-independent protein translocase protein TatC of Haemophilus influenzae (strain ATCC 51907 / DSM 11121 / KW20 / Rd).